A 68-amino-acid chain; its full sequence is Small proline-rich protein 2K (68 aa).

Residues 21–26 form a 1; truncated repeat; that stretch reads PKPCSP. The segment at 21-65 is 3.5 X 9 AA approximate tandem repeats; that stretch reads PKPCSPPKCPEPCPPPKCPETCPPQPCQRKCPPVLEAPCQQKCPS. Tandem repeats lie at residues 27-35, 36-44, and 45-53.

It belongs to the cornifin (SPRR) family. In terms of tissue distribution, not expressed in uterus.

The protein resides in the cytoplasm. Cross-linked envelope protein of keratinocytes. It is a keratinocyte protein that first appears in the cell cytosol, but ultimately becomes cross-linked to membrane proteins by transglutaminase. All that results in the formation of an insoluble envelope beneath the plasma membrane. The chain is Small proline-rich protein 2K (Sprr2k) from Mus musculus (Mouse).